Consider the following 214-residue polypeptide: Adenylate kinase (214 aa).

10 to 15 is an ATP binding site; that stretch reads GAGKGT. The segment at 30-59 is NMP; it reads STGDIFRANIKGNTPLGQKAKEYMDKGELV. AMP contacts are provided by residues T31, R36, 57 to 59, 85 to 88, and Q92; these read ELV and GFPR. The LID stretch occupies residues 126 to 163; that stretch reads GRRVCTNCGATYNVVFNPTKVEGICDVCNSPVIQRADD. R127 lines the ATP pocket. Positions 130 and 133 each coordinate Zn(2+). Residue 136 to 137 coordinates ATP; sequence TY. Zn(2+) is bound by residues C150 and C153. R160 and R171 together coordinate AMP. ATP is bound at residue G199.

It belongs to the adenylate kinase family. In terms of assembly, monomer.

It localises to the cytoplasm. It carries out the reaction AMP + ATP = 2 ADP. The protein operates within purine metabolism; AMP biosynthesis via salvage pathway; AMP from ADP: step 1/1. In terms of biological role, catalyzes the reversible transfer of the terminal phosphate group between ATP and AMP. Plays an important role in cellular energy homeostasis and in adenine nucleotide metabolism. The polypeptide is Adenylate kinase (Ruminiclostridium cellulolyticum (strain ATCC 35319 / DSM 5812 / JCM 6584 / H10) (Clostridium cellulolyticum)).